The primary structure comprises 690 residues: Protein SPT2 homolog (690 aa).

An important for interaction with DNA region spans residues 1-579 (MDFHNILVMA…PGHRPVFRPQ (579 aa)). Positions 40–82 (ESAAVQAFLRRKEEEKRKKELEEKRKKERLLAKRIELKHDRKA) form a coiled coil. 2 disordered regions span residues 105 to 167 (PKKR…APAP) and 186 to 619 (EIKV…QEEI). Basic and acidic residues predominate over residues 186-228 (EIKVVKKIEERPRTAEELREREYLERKNKRVETQKKKSEKEVK). The span at 229 to 243 (SAGISSSSKKATSLK) shows a compositional bias: low complexity. Composition is skewed to basic and acidic residues over residues 244 to 259 (ECAD…DKHA) and 271 to 285 (TDKK…EKHS). Positions 369–380 (HETNSSAKRPSS) are enriched in polar residues. The span at 383–396 (GKGGSGHPAGGSSA) shows a compositional bias: gly residues. The segment covering 397–442 (GPGRSSSNSGTGPGRPGSVSSPGPGRQGSSSAAGPGRPSSSSSLGP) has biased composition (low complexity). Gly residues-rich tracts occupy residues 443–457 (GRLG…GRPG), 465–477 (GRPG…GPGR), and 489–521 (LGSG…GPGR). Over residues 545–565 (VSETISSKNLVTRPSNGQING) the composition is skewed to polar residues. Residues 580–690 (GIGRPPVGYK…KRQSKKLRTR (111 aa)) form an important for interaction with histones region. The segment covering 593–617 (DDDDDDDEYDSEMDDFIEDEGEPQE) has biased composition (acidic residues). Residues 650 to 690 (REQQKEEARSLRLGVQEDLEELRREEEELKRKRQSKKLRTR) are a coiled coil.

It belongs to the SPT2 family. As to quaternary structure, interacts with POLR1A. Interacts with histones. Interacts with a heterotetrameric complex formed by histone H3 and H4, especially when the histone tetramer is not bound to DNA.

Its subcellular location is the nucleus. It is found in the nucleolus. In terms of biological role, histone chaperone that stabilizes pre-existing histone tetramers and regulates replication-independent histone exchange on chromatin. Required for normal chromatin refolding in the coding region of transcribed genes, and for the suppression of spurious transcription. Binds DNA and histones and promotes nucleosome assembly (in vitro). Modulates RNA polymerase 1-mediated transcription. Required for optimal growth in the presence of the DNA damaging agents actinomycin D or mitomycin C (in vitro). Facilitates formation of tetrameric histone complexes containing histone H3 and H4. Modulates RNA polymerase 1-mediated transcription. Binds DNA, with a preference for branched DNA species, such as Y-form DNA and Holliday junction DNA. This is Protein SPT2 homolog (SPTY2D1) from Gallus gallus (Chicken).